Consider the following 958-residue polypeptide: Structure-specific endonuclease subunit SLX4 (958 aa).

6 disordered regions span residues 89-123, 183-209, 326-400, 531-589, 594-613, and 655-849; these read AESP…KGKT, QKKA…GPID, LATA…LSPT, DLTI…EQHQ, QSNT…SFEL, and STAA…SPPA. Residues 109–121 are compositionally biased toward basic residues; that stretch reads KKPRTAGARKKKG. Basic and acidic residues predominate over residues 332–341; sequence RRPEEAERST. Residues 342–351 are compositionally biased toward polar residues; the sequence is LSRQQDTHIP. Residues 364-373 are compositionally biased toward low complexity; it reads AASKSASAKP. A compositionally biased stretch (basic residues) spans 374–389; that stretch reads KAAKKAPKPRATKKKQ. Positions 600 to 610 are enriched in pro residues; the sequence is QPQPAPPPPPS. Composition is skewed to low complexity over residues 655-666, 775-787, and 821-838; these read STAAQAAMSTSA, TTSP…RAKA, and PDSG…SSPD.

Belongs to the SLX4 family. In terms of assembly, forms a heterodimer with SLX1. In terms of processing, phosphorylated in response to DNA damage.

It localises to the nucleus. In terms of biological role, regulatory subunit of the SLX1-SLX4 structure-specific endonuclease that resolves DNA secondary structures generated during DNA repair and recombination. Has endonuclease activity towards branched DNA substrates, introducing single-strand cuts in duplex DNA close to junctions with ss-DNA. The chain is Structure-specific endonuclease subunit SLX4 from Chaetomium globosum (strain ATCC 6205 / CBS 148.51 / DSM 1962 / NBRC 6347 / NRRL 1970) (Soil fungus).